Consider the following 562-residue polypeptide: Endochitinase (562 aa).

The signal sequence occupies residues 1-20 (MSLLYIILLFTQFLLLPTDA). A GH18 domain is found at 27-311 (TNIAVYWGQN…EILKNLLTSA (285 aa)). Glu-157 (proton donor) is an active-site residue. Disordered stretches follow at residues 329 to 358 (TSSASTSSASTSQKKTTQSTTSTQSKSKVT) and 461 to 484 (TLSPTTTSTSSGSTSSGSTSSDST). The tract at residues 481–562 (SDSTARTLAK…NFSYLESNYF (82 aa)) is chitin-binding, high affinity. Residue Asn-553 is glycosylated (N-linked (GlcNAc...) asparagine).

This sequence belongs to the glycosyl hydrolase 18 family. Chitinase class V subfamily. Extensively glycosylated with a series of short O-linked mannose oligosaccharides ranging in size from Man(2) to Man(5).

The protein localises to the secreted. Its subcellular location is the cell wall. The enzyme catalyses Random endo-hydrolysis of N-acetyl-beta-D-glucosaminide (1-&gt;4)-beta-linkages in chitin and chitodextrins.. Functionally, chitinase is required for cell separation during growth of S.cerevisiae. This Saccharomyces cerevisiae (strain ATCC 204508 / S288c) (Baker's yeast) protein is Endochitinase (CTS1).